Here is a 168-residue protein sequence, read N- to C-terminus: uncharacterized protein (168 aa).

The N-terminal 29 residues, 1–29 (MGWRFPSPSPRQASPVAPLLAAPTAVRSC), are a transit peptide targeting the mitochondrion. Residues 98–110 (GETKARRAREEGK) show a composition bias toward basic and acidic residues. The segment at 98 to 152 (GETKARRAREEGKLPSLGNAPAPRRRSVAWPAAEGSCAAPESSPPASEASLPAPE) is disordered. Low complexity predominate over residues 128-152 (PAAEGSCAAPESSPPASEASLPAPE).

Its subcellular location is the mitochondrion. This is an uncharacterized protein from Homo sapiens (Human).